The chain runs to 370 residues: MPHQQILMLFGLLPVATNISTWWNFGSMLLACLTLQLLTGFFLAVHYTANINLAFSSIIHITRDVPYGWMMQNLHAIGASMFFICIYIHIARGLYYGSYLNKETWLSGTTLLIMLMATAFFGYVLPWGQMSFWAATVITNLLTAIPYLGSTMTTWLWGGFAINDPTLTRFFALHFILPFGIISLSSLHILLLHEEGSSNPLGTNSDIDKIPFHPYQTYKDMLMLTIMTIMLLTIVSFFPDIFNDPDNFSKANPLVTPQHIKPEWYFLFTYGILRSIPNKLGGALALTMSIMMLLTLPFTHTSKLRSMMFRPLMQLTFWTFTATFLVISWTATKPVEPPFTTISQVAALMYFLFFISNPIMGWLENKIMKL.

4 helical membrane passes run 25-45 (FGSM…FLAV), 69-90 (WMMQ…YIHI), 105-125 (WLSG…GYVL), and 170-190 (FFAL…LHIL). Residues H75 and H89 each contribute to the heme b site. Residues H174 and H188 each contribute to the heme b site. An a ubiquinone-binding site is contributed by H193. A run of 4 helical transmembrane segments spans residues 218–238 (YKDM…VSFF), 280–300 (LGGA…PFTH), 312–332 (LMQL…WTAT), and 339–358 (FTTI…ISNP).

The protein belongs to the cytochrome b family. In terms of assembly, the cytochrome bc1 complex contains 3 respiratory subunits (MT-CYB, CYC1 and UQCRFS1), 2 core proteins (UQCRC1 and UQCRC2) and probably 6 low-molecular weight proteins. Heme b is required as a cofactor.

Its subcellular location is the mitochondrion inner membrane. In terms of biological role, component of the ubiquinol-cytochrome c reductase complex (complex III or cytochrome b-c1 complex) that is part of the mitochondrial respiratory chain. The b-c1 complex mediates electron transfer from ubiquinol to cytochrome c. Contributes to the generation of a proton gradient across the mitochondrial membrane that is then used for ATP synthesis. The chain is Cytochrome b (MT-CYB) from Chilabothrus strigilatus strigilatus (New Providence boa constrictor).